We begin with the raw amino-acid sequence, 1020 residues long: FERM domain-containing protein 4A (1020 aa).

One can recognise an FERM domain in the interval 5 to 307 (RRCQVHLLDD…SQHQFYLDRK (303 aa)). The tract at residues 343 to 405 (KGKIISGSSG…RLCLREAELT (63 aa)) is necessary for interaction with CYTH1. Residues 351-367 (SGSLLSSGSQESDSSQS) show a composition bias toward low complexity. The segment at 351–371 (SGSLLSSGSQESDSSQSAKKD) is disordered. Residues 367-401 (SAKKDMLAALKSRQEALEETLRQRLEELKRLCLRE) adopt a coiled-coil conformation. S515 is subject to Phosphoserine. Positions 538-665 (DEDSQVTSTI…MPSTPDLRVR (128 aa)) are disordered. Over residues 542-551 (QVTSTISPLQ) the composition is skewed to polar residues. Pro residues predominate over residues 556 to 572 (GLPPRPPSSHNRPPPPQ). Residues 565–920 (HNRPPPPQSL…QWYQRSTASH (356 aa)) form a necessary for tight junction and adherens junction localization; Requires for interaction with PARD3 region. S590 and S601 each carry phosphoserine. Residues 609-624 (VKKRSSHGHSSSHKRF) are compositionally biased toward basic residues. A compositionally biased stretch (polar residues) spans 626 to 658 (STGSCTEAGVSSSLQNSPIRSLPHWNSQSSMPS). Residues S666 and S696 each carry the phosphoserine modification. Disordered regions lie at residues 698–741 (ESQG…HSSS) and 757–810 (AEDS…QSQP). Residues 773–796 (RAAGALGSASSGSMPNLAARSGAA) are compositionally biased toward low complexity. Phosphoserine is present on residues S785, S854, and S882. 2 disordered regions span residues 862-949 (KESW…STFV) and 961-1020 (CKAT…STDE). Over residues 893–910 (DGAHDKGSGRAAVSDELR) the composition is skewed to basic and acidic residues. A compositionally biased stretch (low complexity) spans 927–947 (SHTSSTSSDSGSQYSTSSQST). 3 stretches are compositionally biased toward polar residues: residues 967–981 (ALPQSQRSSTPSSEI), 994–1004 (TWQTGEATENS), and 1011–1020 (ESPTHQSTDE).

In terms of assembly, interacts (via coiled-coil domain) with CYTH1 (via coiled-coil domain). Interacts with PARD3 (via coiled-coil domain). Found in a complex with PARD3, CYTH1 and FRMD4A. Interacts with CYTH2. Interacts with CYTH3.

It localises to the cytoplasm. The protein resides in the cytoskeleton. It is found in the cell junction. The protein localises to the adherens junction. Its subcellular location is the tight junction. Functionally, scaffolding protein that regulates epithelial cell polarity by connecting ARF6 activation with the PAR3 complex. Plays a redundant role with FRMD4B in epithelial polarization. May regulate MAPT secretion by activating ARF6-signaling. The protein is FERM domain-containing protein 4A (Frmd4a) of Mus musculus (Mouse).